Consider the following 704-residue polypeptide: Matrix metalloproteinase-9 (704 aa).

An N-terminal signal peptide occupies residues 1 to 19 (MSPRQPLVLVFLVLGCCSA). A propeptide spans 20 to 106 (APRPHKPTVV…PRCGVPDLGK (87 aa)) (activation peptide). Asn-38 carries an N-linked (GlcNAc...) asparagine glycan. The short motif at 97–104 (PRCGVPDL) is the Cysteine switch element. Residue Cys-99 coordinates Zn(2+). N-linked (GlcNAc...) asparagine glycosylation is present at Asn-127. The Ca(2+) site is built by Asp-131 and Asp-165. The Zn(2+) site is built by His-175 and Asp-177. Asp-182, Gly-183, Asn-185, and Leu-187 together coordinate Ca(2+). A Zn(2+)-binding site is contributed by His-190. Residues Gly-197, Gln-199, and Asp-201 each coordinate Ca(2+). His-203 contributes to the Zn(2+) binding site. Asp-205, Asp-206, and Glu-208 together coordinate Ca(2+). 3 Fibronectin type-II domains span residues 225–273 (ADGA…FCPS), 283–331 (GDGK…FCPT), and 342–390 (SAGE…FCPD). 6 disulfides stabilise this stretch: Cys-230/Cys-256, Cys-244/Cys-271, Cys-288/Cys-314, Cys-302/Cys-329, Cys-347/Cys-373, and Cys-361/Cys-388. His-401 is a binding site for Zn(2+). Residue Glu-402 is part of the active site. The Zn(2+) site is built by His-405 and His-411. A disordered region spans residues 434 to 507 (DDVRGIQHLY…PSEAPTVPVD (74 aa)). Composition is skewed to pro residues over residues 450 to 461 (EPQPPTAPPTAP) and 483 to 496 (TGPP…PPTA). An intrachain disulfide couples Cys-513 to Cys-701. Hemopexin repeat units follow at residues 515-560 (VNIF…WPAL), 561-605 (PRKL…GLGP), 607-654 (VTQV…YPGV), and 655-701 (PLNT…ILQC).

This sequence belongs to the peptidase M10A family. As to quaternary structure, exists as monomer or homodimer; disulfide-linked. Also exists as heterodimer with LCN2. Macrophages and transformed cell lines produce only the monomeric form. Interacts with ECM1. Zn(2+) serves as cofactor. Requires Ca(2+) as cofactor. In terms of processing, N- and O-glycosylated.

It localises to the secreted. The protein resides in the extracellular space. Its subcellular location is the extracellular matrix. It catalyses the reaction Cleavage of gelatin types I and V and collagen types IV and V.. Its function is as follows. Matrix metalloproteinase that plays an essential role in local proteolysis of the extracellular matrix and in leukocyte migration. Could play a role in bone osteoclastic resorption. Cleaves KiSS1 at a Gly-|-Leu bond. Cleaves NINJ1 to generate the Secreted ninjurin-1 form. Cleaves type IV and type V collagen into large C-terminal three quarter fragments and shorter N-terminal one quarter fragments. Degrades fibronectin but not laminin or Pz-peptide. This Canis lupus familiaris (Dog) protein is Matrix metalloproteinase-9 (MMP9).